A 207-amino-acid chain; its full sequence is Ribonuclease HII (207 aa).

Positions 10–199 (RLIAGVDEVG…VRNALLDAEL (190 aa)) constitute an RNase H type-2 domain. Residues D16, E17, and D108 each contribute to the a divalent metal cation site.

The protein belongs to the RNase HII family. Requires Mn(2+) as cofactor. It depends on Mg(2+) as a cofactor.

It is found in the cytoplasm. The enzyme catalyses Endonucleolytic cleavage to 5'-phosphomonoester.. In terms of biological role, endonuclease that specifically degrades the RNA of RNA-DNA hybrids. In Erwinia tasmaniensis (strain DSM 17950 / CFBP 7177 / CIP 109463 / NCPPB 4357 / Et1/99), this protein is Ribonuclease HII.